The sequence spans 342 residues: Dihydroorotate dehydrogenase (quinone) (342 aa).

FMN is bound by residues 65 to 69 (AGLDK) and T89. Residue K69 coordinates substrate. 114-118 (NRMGF) contacts substrate. Residues N142 and N175 each contribute to the FMN site. A substrate-binding site is contributed by N175. S178 (nucleophile) is an active-site residue. Substrate is bound at residue N180. FMN is bound by residues K220 and T248. Residue 249 to 250 (NT) participates in substrate binding. FMN-binding positions include G271, G300, and 321-322 (YT).

It belongs to the dihydroorotate dehydrogenase family. Type 2 subfamily. In terms of assembly, monomer. FMN serves as cofactor.

It is found in the cell membrane. The catalysed reaction is (S)-dihydroorotate + a quinone = orotate + a quinol. It functions in the pathway pyrimidine metabolism; UMP biosynthesis via de novo pathway; orotate from (S)-dihydroorotate (quinone route): step 1/1. Its function is as follows. Catalyzes the conversion of dihydroorotate to orotate with quinone as electron acceptor. In Burkholderia pseudomallei (strain K96243), this protein is Dihydroorotate dehydrogenase (quinone).